Here is a 314-residue protein sequence, read N- to C-terminus: DNA-directed RNA polymerase subunit alpha (314 aa).

The tract at residues 1 to 228 (MIEFEKPKIH…EHLAIFVNLN (228 aa)) is alpha N-terminal domain (alpha-NTD). An alpha C-terminal domain (alpha-CTD) region spans residues 245–314 (KEKMLEMTIE…LLGLGFRSED (70 aa)).

It belongs to the RNA polymerase alpha chain family. In terms of assembly, homodimer. The RNAP catalytic core consists of 2 alpha, 1 beta, 1 beta' and 1 omega subunit. When a sigma factor is associated with the core the holoenzyme is formed, which can initiate transcription.

The catalysed reaction is RNA(n) + a ribonucleoside 5'-triphosphate = RNA(n+1) + diphosphate. Its function is as follows. DNA-dependent RNA polymerase catalyzes the transcription of DNA into RNA using the four ribonucleoside triphosphates as substrates. This Pediococcus pentosaceus (strain ATCC 25745 / CCUG 21536 / LMG 10740 / 183-1w) protein is DNA-directed RNA polymerase subunit alpha.